A 163-amino-acid chain; its full sequence is ATP synthase subunit b' (163 aa).

The chain crosses the membrane as a helical span at residues 28–45; that stretch reads LMAIQFLLLALILNATLY.

It belongs to the ATPase B chain family. F-type ATPases have 2 components, F(1) - the catalytic core - and F(0) - the membrane proton channel. F(1) has five subunits: alpha(3), beta(3), gamma(1), delta(1), epsilon(1). F(0) has four main subunits: a(1), b(1), b'(1) and c(10-14). The alpha and beta chains form an alternating ring which encloses part of the gamma chain. F(1) is attached to F(0) by a central stalk formed by the gamma and epsilon chains, while a peripheral stalk is formed by the delta, b and b' chains.

It localises to the cellular thylakoid membrane. Functionally, f(1)F(0) ATP synthase produces ATP from ADP in the presence of a proton or sodium gradient. F-type ATPases consist of two structural domains, F(1) containing the extramembraneous catalytic core and F(0) containing the membrane proton channel, linked together by a central stalk and a peripheral stalk. During catalysis, ATP synthesis in the catalytic domain of F(1) is coupled via a rotary mechanism of the central stalk subunits to proton translocation. Component of the F(0) channel, it forms part of the peripheral stalk, linking F(1) to F(0). The b'-subunit is a diverged and duplicated form of b found in plants and photosynthetic bacteria. The polypeptide is ATP synthase subunit b' (Nostoc sp. (strain PCC 7120 / SAG 25.82 / UTEX 2576)).